The sequence spans 498 residues: Diacylglycerol O-acyltransferase 1 (498 aa).

Positions 1–66 are disordered; that stretch reads MGDRGGAGSS…AHTRDKDRQT (66 aa). At 1 to 92 the chain is on the cytoplasmic side; sequence MGDRGGAGSS…SLFSSDSGFS (92 aa). Residues 1–96 are involved in homomerization; the sequence is MGDRGGAGSS…SDSGFSNYRG (96 aa). Serine 20 carries the phosphoserine modification. The span at 58–68 shows a compositional bias: basic and acidic residues; sequence HTRDKDRQTSV. Residues 93-127 form a helical membrane-spanning segment; that stretch reads NYRGILNWCVVMLILSNARLSLENLIKYGILVDPI. The Lumenal segment spans residues 128-139; the sequence is QVVSLFLKDPYS. Positions 128-139 are extracellular loop 1 (EL1); that stretch reads QVVSLFLKDPYS. Residues 140–165 traverse the membrane as a helical segment; it reads WPAPCLIIASNIFIVATFQIEKRLSV. Residues 140-498 are MBOAT fold; the sequence is WPAPCLIIAS…VLNYDAPVGA (359 aa). At 166–170 the chain is on the cytoplasmic side; that stretch reads GALTE. A helical transmembrane segment spans residues 171 to 193; that stretch reads QMGLLLHVVNLATIICFPAAVAL. The Lumenal portion of the chain corresponds to 194–200; it reads LVESITP. The helical transmembrane segment at 201–232 threads the bilayer; that stretch reads VGSLFALASYSIIFLKLSSYRDVNLWCRQRRV. Over 233-284 the chain is Cytoplasmic; sequence KAKAVSAGKKVSGAAAQNTVSYPDNLTYRDLYYFIFAPTLCYELNFPRSPRI. The segment at 235 to 287 is intracellular loop 1 (IL1); it reads KAVSAGKKVSGAAAQNTVSYPDNLTYRDLYYFIFAPTLCYELNFPRSPRIRKR. Residues 285 to 319 form a helical membrane-spanning segment; that stretch reads RKRFLLRRVLEMLFFTQLQVGLIQQWMVPTIQNSM. Residues 320–326 lie on the Lumenal side of the membrane; the sequence is KPFKDMD. The chain crosses the membrane as a helical span at residues 327–364; it reads YSRIIERLLKLAVPNHLIWLIFFYWLFHSCLNAVAELL. The Cytoplasmic portion of the chain corresponds to 365-410; it reads QFGDREFYRDWWNAESVTYFWQNWNIPVHKWCIRHFYKPMLRLGSN. Residues 365-410 form an intracellular loop 2 (IL2) region; it reads QFGDREFYRDWWNAESVTYFWQNWNIPVHKWCIRHFYKPMLRLGSN. The short motif at 371-377 is the FYXDWWN motif element; it reads FYRDWWN. An acyl-CoA is bound by residues 385–393, tyrosine 401, and arginine 415; that span reads WQNWNIPVH. Positions 391-405 are amphipathic helix (AH); it reads PVHKWCIRHFYKPML. The chain crosses the membrane as a helical span at residues 411–431; the sequence is KWMARTGVFWASAFFHEYLVS. Residue histidine 426 is part of the active site. Over 432-439 the chain is Lumenal; it reads IPLRMFRL. Residues 440–458 form a helical membrane-spanning segment; the sequence is WAFTAMMAQVPLAWIVNRF. Over 459 to 460 the chain is Cytoplasmic; that stretch reads FQ. Residues 461-492 form a helical membrane-spanning segment; sequence GNYGNAAVWVTLIIGQPVAVLMYVHDYYVLNY. Tyrosine 488 provides a ligand contact to an acyl-CoA. Topologically, residues 493–498 are lumenal; it reads DAPVGA.

It belongs to the membrane-bound acyltransferase family. Sterol o-acyltransferase subfamily. As to quaternary structure, homodimer or homotetramer; both forms have similar enzymatic activities.

It localises to the endoplasmic reticulum membrane. The enzyme catalyses an acyl-CoA + a 1,2-diacyl-sn-glycerol = a triacyl-sn-glycerol + CoA. It carries out the reaction all-trans-retinol + an acyl-CoA = an all-trans-retinyl ester + CoA. It catalyses the reaction 2-(9Z-octadecenoyl)-glycerol + (9Z)-octadecenoyl-CoA = 1,2-di-(9Z-octadecenoyl)-sn-glycerol + CoA. The catalysed reaction is 1,2-di-(9Z-octadecenoyl)-sn-glycerol + (9Z)-octadecenoyl-CoA = 1,2,3-tri-(9Z-octadecenoyl)-glycerol + CoA. The enzyme catalyses all-trans-retinol + hexadecanoyl-CoA = all-trans-retinyl hexadecanoate + CoA. It carries out the reaction 1-O-(9Z-octadecenyl)-glycerol + (9Z)-octadecenoyl-CoA = 1-O-(9Z-octadecyl)-3-(9Z-octadecenoyl)-glycerol + CoA. It catalyses the reaction 1-O-(9Z-octadecyl)-3-(9Z-octadecenoyl)-glycerol + (9Z)-octadecenoyl-CoA = 1-O-(9Z-octadecenyl)-2,3-di-(9Z-octadecenoyl)glycerol + CoA. The catalysed reaction is 1-(9Z-octadecenoyl)-glycerol + (9Z)-octadecenoyl-CoA = 1,2-di-(9Z-octadecenoyl)-glycerol + CoA. The enzyme catalyses 1,2-di-(9Z-octadecenoyl)-glycerol + (9Z)-octadecenoate + H(+) = 1,2,3-tri-(9Z-octadecenoyl)-glycerol + H2O. It carries out the reaction 1-octadecanoyl-2-(5Z,8Z,11Z,14Z-eicosatetraenoyl)-sn-glycerol + (9Z)-octadecenoyl-CoA = 1-octadecanoyl-2-(5Z,8Z,11Z,14Z)-eicosatetraenoyl-3-(9Z)-octadecenoyl-sn-glycerol + CoA. It catalyses the reaction hexadecane-1,2-diol + 2 hexadecanoyl-CoA = 1,2-O,O-dihexadecanoyl-1,2-hexadecanediol + 2 CoA. The catalysed reaction is hexadecane-1,2-diol + hexadecanoyl-CoA = 2-hydroxyhexadecyl hexadecanoate + CoA. The enzyme catalyses 2-(9Z-octadecenoyl)-glycerol + hexadecanoyl-CoA = 1-hexadecanoyl-2-(9Z-octadecenoyl)-sn-glycerol + CoA. It carries out the reaction 1,2-di-(9Z-octadecenoyl)-sn-glycerol + hexadecanoyl-CoA = 1,2-di-(9Z)-octadecenoyl-3-hexadecanoyl-sn-glycerol + CoA. It catalyses the reaction hexadecan-1-ol + hexadecanoyl-CoA = hexadecanyl hexadecanoate + CoA. The catalysed reaction is 13-cis-retinol + hexadecanoyl-CoA = 13-cis-retinyl hexadecanoate + CoA. The enzyme catalyses 1,3-di-(9Z-octadecenoyl)-glycerol + (9Z)-octadecenoyl-CoA = 1,2,3-tri-(9Z-octadecenoyl)-glycerol + CoA. It carries out the reaction 2,3-di-(9Z)-octadecenoyl-sn-glycerol + (9Z)-octadecenoyl-CoA = 1,2,3-tri-(9Z-octadecenoyl)-glycerol + CoA. It participates in lipid metabolism; glycerolipid metabolism. Its function is as follows. Catalyzes the terminal and only committed step in triacylglycerol synthesis by using diacylglycerol and fatty acyl CoA as substrates. Highly expressed in epithelial cells of the small intestine and its activity is essential for the absorption of dietary fats. In liver, plays a role in esterifying exogenous fatty acids to glycerol, and is required to synthesize fat for storage. Also present in female mammary glands, where it produces fat in the milk. May be involved in VLDL (very low density lipoprotein) assembly. In contrast to DGAT2 it is not essential for survival. Functions as the major acyl-CoA retinol acyltransferase (ARAT) in the skin, where it acts to maintain retinoid homeostasis and prevent retinoid toxicity leading to skin and hair disorders. Exhibits additional acyltransferase activities, includin acyl CoA:monoacylglycerol acyltransferase (MGAT), wax monoester and wax diester synthases. Also able to use 1-monoalkylglycerol (1-MAkG) as an acyl acceptor for the synthesis of monoalkyl-monoacylglycerol (MAMAG). The sequence is that of Diacylglycerol O-acyltransferase 1 from Rattus norvegicus (Rat).